A 217-amino-acid polypeptide reads, in one-letter code: Monomethylamine corrinoid protein 2 (217 aa).

Residues 1 to 91 (MTNTEIFDKL…ELEKNKKEGD (91 aa)) enclose the B12-binding N-terminal domain. Positions 93–217 (AGLAITFVAE…AAKVALEVMK (125 aa)) constitute a B12-binding domain. His-106 provides a ligand contact to methylcob(III)alamin.

Belongs to the methylamine corrinoid protein family. As to quaternary structure, can form a complex with MtmB.

It functions in the pathway one-carbon metabolism; methanogenesis from methylamine. Functionally, acts as a methyl group carrier between MtmB and MtbA. This chain is Monomethylamine corrinoid protein 2 (mtmC2), found in Methanosarcina barkeri.